A 227-amino-acid polypeptide reads, in one-letter code: Cytidylate kinase (227 aa).

ATP is bound at residue 10–18 (GPASSGKST).

The protein belongs to the cytidylate kinase family. Type 1 subfamily.

It is found in the cytoplasm. It catalyses the reaction CMP + ATP = CDP + ADP. It carries out the reaction dCMP + ATP = dCDP + ADP. This chain is Cytidylate kinase, found in Streptococcus agalactiae serotype Ia (strain ATCC 27591 / A909 / CDC SS700).